Here is a 737-residue protein sequence, read N- to C-terminus: Polyribonucleotide nucleotidyltransferase (737 aa).

Mg(2+)-binding residues include D489 and D495. Positions 556–615 constitute a KH domain; the sequence is PKIDTIKIDVDKIKIVIGKGGETIDKIIAETGVKIDIDEEGNVSIYSSDQDAINRAKEII. The S1 motif domain occupies 625–693; that stretch reads DEVYRAKVVR…EKGRIDASMK (69 aa). The interval 691 to 737 is disordered; it reads SMKALLPRPPKPEHDEKGEKSERPHRPRHHKDHKPKKEFTETPKDSE. A compositionally biased stretch (basic and acidic residues) spans 700–714; it reads PKPEHDEKGEKSERP. The segment covering 715 to 724 has biased composition (basic residues); sequence HRPRHHKDHK. Residues 725–737 are compositionally biased toward basic and acidic residues; the sequence is PKKEFTETPKDSE.

It belongs to the polyribonucleotide nucleotidyltransferase family. Mg(2+) serves as cofactor.

The protein localises to the cytoplasm. The enzyme catalyses RNA(n+1) + phosphate = RNA(n) + a ribonucleoside 5'-diphosphate. Its function is as follows. Involved in mRNA degradation. Catalyzes the phosphorolysis of single-stranded polyribonucleotides processively in the 3'- to 5'-direction. The sequence is that of Polyribonucleotide nucleotidyltransferase from Streptococcus pneumoniae (strain ATCC 700669 / Spain 23F-1).